Reading from the N-terminus, the 141-residue chain is Hemoglobin subunit alpha-2 (141 aa).

Residues 1 to 141 enclose the Globin domain; it reads VLTDAERKEV…VATVLTSKYR (141 aa). O2 is bound at residue His58. His87 contributes to the heme b binding site.

The protein belongs to the globin family. As to quaternary structure, heterotetramer of two alpha chains and two beta chains. As to expression, red blood cells.

Its function is as follows. Involved in oxygen transport from the lung to the various peripheral tissues. In Tachyglossus aculeatus aculeatus (Southeast Australian short-beaked echidna), this protein is Hemoglobin subunit alpha-2.